Consider the following 215-residue polypeptide: MKGVYFVSGIDTDIGKTVATGVLAKQLLQQGKSVITQKPVQTGCQNIADDIAVHRKIMGIPMQEADKRRLTMPEIFSYPASPHLAARLDGRALDLDKIRTATQELAAQYEVVLVEGAGGLMVPLTENLLTIDYIRQQGYPVILVTSGRLGSINHTLLSFAALKQYGIRLHSLVFNHIHDSRDAHIAQDSLSYLKCRLKADFSEAEWMELAKTDAV.

Aspartate 13–valine 18 is a binding site for ATP. Position 17 (threonine 17) interacts with Mg(2+). The active site involves lysine 38. Threonine 42 contributes to the substrate binding site. ATP-binding positions include aspartate 50, glutamate 115–glycine 118, and asparagine 175–histidine 176. Mg(2+) contacts are provided by aspartate 50 and glutamate 115.

Belongs to the dethiobiotin synthetase family. Homodimer. Mg(2+) serves as cofactor.

It is found in the cytoplasm. It carries out the reaction (7R,8S)-7,8-diammoniononanoate + CO2 + ATP = (4R,5S)-dethiobiotin + ADP + phosphate + 3 H(+). Its pathway is cofactor biosynthesis; biotin biosynthesis; biotin from 7,8-diaminononanoate: step 1/2. In terms of biological role, catalyzes a mechanistically unusual reaction, the ATP-dependent insertion of CO2 between the N7 and N8 nitrogen atoms of 7,8-diaminopelargonic acid (DAPA, also called 7,8-diammoniononanoate) to form a ureido ring. This Neisseria meningitidis serogroup B (strain ATCC BAA-335 / MC58) protein is ATP-dependent dethiobiotin synthetase BioD.